Here is a 327-residue protein sequence, read N- to C-terminus: MEELLIENSQRFTIFPIQHPECWNWYKKLESLTWTAQEVDMCKDIDDWEAMPKPQREFYKQILAFFVVADEIVIENLLTNFMREIKVKEVLYFYTMQAAQECVHSEAYSIQVKTLIPDEKEQQRIFSGIEKHPIIKKMAQWVRQWMDPTKNSLGERLVGFAAVEGILFQNHFVAIQFLKEQNIMPGLVSYNEFISRDEGVHCSFACFLISNYVYNIPEEKIIHKILKEAVELVDEFISYAFDKARGRVPGFSKEMLFQYIRYFTDNLCFMMQCKSIYKVGNPFPQMTKFFLNEVEKTNFFELRPTQYQNCVKDDAFAFKLFLNDDDF.

Residues Asp70, Glu101, and His104 each coordinate Fe cation. The active site involves Tyr108. Fe cation contacts are provided by Glu164, Glu198, and His201.

It belongs to the ribonucleoside diphosphate reductase small chain family. As to quaternary structure, heterotetramer composed of a homodimer of the large subunit (R1) and a homodimer of the small subunit (R2). Larger multisubunit protein complex are also active, composed of (R1)n(R2)n. Requires Fe cation as cofactor.

It carries out the reaction a 2'-deoxyribonucleoside 5'-diphosphate + [thioredoxin]-disulfide + H2O = a ribonucleoside 5'-diphosphate + [thioredoxin]-dithiol. Its function is as follows. Ribonucleoside-diphosphate reductase holoenzyme provides the precursors necessary for viral DNA synthesis. Allows virus growth in non-dividing cells. Catalyzes the biosynthesis of deoxyribonucleotides from the corresponding ribonucleotides. The protein is Ribonucleoside-diphosphate reductase small chain of Ornithodoros (relapsing fever ticks).